The chain runs to 397 residues: Tryptophan synthase beta chain (397 aa).

At lysine 87 the chain carries N6-(pyridoxal phosphate)lysine.

Belongs to the TrpB family. As to quaternary structure, tetramer of two alpha and two beta chains. It depends on pyridoxal 5'-phosphate as a cofactor.

The catalysed reaction is (1S,2R)-1-C-(indol-3-yl)glycerol 3-phosphate + L-serine = D-glyceraldehyde 3-phosphate + L-tryptophan + H2O. It participates in amino-acid biosynthesis; L-tryptophan biosynthesis; L-tryptophan from chorismate: step 5/5. In terms of biological role, the beta subunit is responsible for the synthesis of L-tryptophan from indole and L-serine. The polypeptide is Tryptophan synthase beta chain (Enterobacter sp. (strain 638)).